A 466-amino-acid polypeptide reads, in one-letter code: Cysteine--tRNA ligase (466 aa).

Cysteine 27 serves as a coordination point for Zn(2+). Residues 29–39 carry the 'HIGH' region motif; sequence PTVYNYFHIGN. The Zn(2+) site is built by cysteine 207, histidine 232, and glutamate 236. A 'KMSKS' region motif is present at residues 264 to 268; the sequence is KMSKS. Lysine 267 lines the ATP pocket.

This sequence belongs to the class-I aminoacyl-tRNA synthetase family. As to quaternary structure, monomer. Zn(2+) serves as cofactor.

It is found in the cytoplasm. It carries out the reaction tRNA(Cys) + L-cysteine + ATP = L-cysteinyl-tRNA(Cys) + AMP + diphosphate. This chain is Cysteine--tRNA ligase, found in Clostridium novyi (strain NT).